The sequence spans 81 residues: Small ribosomal subunit protein bS18 (81 aa).

Belongs to the bacterial ribosomal protein bS18 family. In terms of assembly, part of the 30S ribosomal subunit. Forms a tight heterodimer with protein bS6.

Binds as a heterodimer with protein bS6 to the central domain of the 16S rRNA, where it helps stabilize the platform of the 30S subunit. The chain is Small ribosomal subunit protein bS18 from Chloroflexus aurantiacus (strain ATCC 29366 / DSM 635 / J-10-fl).